A 219-amino-acid polypeptide reads, in one-letter code: Large ribosomal subunit protein uL3 (219 aa).

The interval 124–154 (FSGSIKRHNQSEGPKSHGSRYHRRPGSMGPI) is disordered.

It belongs to the universal ribosomal protein uL3 family. As to quaternary structure, part of the 50S ribosomal subunit. Forms a cluster with proteins L14 and L19.

Functionally, one of the primary rRNA binding proteins, it binds directly near the 3'-end of the 23S rRNA, where it nucleates assembly of the 50S subunit. The polypeptide is Large ribosomal subunit protein uL3 (Phytoplasma mali (strain AT)).